The following is a 1889-amino-acid chain: Treslin (1889 aa).

9 positions are modified to phosphoserine: serine 295, serine 599, serine 820, serine 861, serine 919, serine 934, serine 1002, serine 1027, and serine 1078. The segment covering 812-832 has biased composition (low complexity); that stretch reads DSMSQESMSPPPSSSTHRSVS. A disordered region spans residues 812 to 836; the sequence is DSMSQESMSPPPSSSTHRSVSAITE. The segment at 979-1063 is disordered; it reads RLLHRQIKGR…RENFPVQSIQ (85 aa). The span at 1020–1050 shows a compositional bias: polar residues; it reads LSFSRTNSGSFYSVSQPKSRSVQRIHSSQQE. Disordered stretches follow at residues 1098–1421, 1471–1508, 1520–1543, 1630–1714, 1730–1751, and 1841–1875; these read EIST…SQFS, LPGEEGEEPESTIADELPSVSDPGILVPAPSSVSSSSE, GKQRQDAAQQGSPRASEATSSPQT, SCTP…SLEQ, VCQLPDQSPPKDSASVTEETSW, and QGRTPSSHSTDTRDEEVDVFPSTAEESPFSHTLSR. The segment covering 1127–1179 has biased composition (polar residues); sequence TAQTLLYTPERLQNSPTEMTSAEGTISEATIKTPSSHGYNSPFASKVTSQKTV. A Phosphothreonine modification is found at threonine 1134. A Phosphoserine modification is found at serine 1141. The segment covering 1187–1197 has biased composition (low complexity); that stretch reads SPPLTKLPSTP. Residues 1203 to 1219 show a composition bias toward polar residues; sequence QPPQCSSDCTWPHSVNS. The segment covering 1339 to 1351 has biased composition (low complexity); that stretch reads TSPSVTSSVSCPV. Positions 1373-1382 are enriched in basic residues; it reads KLRRSCRKKS. Residue serine 1406 is modified to Phosphoserine. Positions 1496–1508 are enriched in low complexity; it reads LVPAPSSVSSSSE. 2 stretches are compositionally biased toward polar residues: residues 1525–1543 and 1652–1662; these read DAAQQGSPRASEATSSPQT and WTPSPKQSGKT. Positions 1705-1714 are enriched in basic and acidic residues; the sequence is PEGKERSLEQ.

The protein belongs to the treslin family. As to quaternary structure, interacts with TOPBP1 (via BRCT domains); interaction takes place in a CDK2-dependent manner. Component of the replisome complex composed of at least DONSON, MCM2, MCM7, PCNA and TICRR.

It is found in the nucleus. Regulator of DNA replication and S/M and G2/M checkpoints. Regulates the triggering of DNA replication initiation via its interaction with TOPBP1 by participating in CDK2-mediated loading of CDC45L onto replication origins. Required for the transition from pre-replication complex (pre-RC) to pre-initiation complex (pre-IC). Required to prevent mitotic entry after treatment with ionizing radiation. In Mus musculus (Mouse), this protein is Treslin (Ticrr).